A 346-amino-acid polypeptide reads, in one-letter code: Uroporphyrinogen decarboxylase (346 aa).

Substrate-binding positions include 26–30 (RQAGR), Asp76, Tyr153, Ser208, and His323.

Belongs to the uroporphyrinogen decarboxylase family. As to quaternary structure, homodimer.

It localises to the cytoplasm. It carries out the reaction uroporphyrinogen III + 4 H(+) = coproporphyrinogen III + 4 CO2. It participates in porphyrin-containing compound metabolism; protoporphyrin-IX biosynthesis; coproporphyrinogen-III from 5-aminolevulinate: step 4/4. In terms of biological role, catalyzes the decarboxylation of four acetate groups of uroporphyrinogen-III to yield coproporphyrinogen-III. This Prochlorococcus marinus (strain MIT 9312) protein is Uroporphyrinogen decarboxylase.